A 650-amino-acid chain; its full sequence is Acetyl-coenzyme A synthetase (650 aa).

CoA-binding positions include 191-194 (RGGR), T311, and N335. Residues 387–389 (GEP), 411–416 (DTWWQT), D500, and R515 contribute to the ATP site. S523 is a CoA binding site. Residue R526 participates in ATP binding. Mg(2+) contacts are provided by V537, H539, and V542. Position 584 (R584) interacts with CoA. K609 is modified (N6-acetyllysine).

The protein belongs to the ATP-dependent AMP-binding enzyme family. Mg(2+) serves as cofactor. Post-translationally, acetylated. Deacetylation by the SIR2-homolog deacetylase activates the enzyme.

The enzyme catalyses acetate + ATP + CoA = acetyl-CoA + AMP + diphosphate. Catalyzes the conversion of acetate into acetyl-CoA (AcCoA), an essential intermediate at the junction of anabolic and catabolic pathways. AcsA undergoes a two-step reaction. In the first half reaction, AcsA combines acetate with ATP to form acetyl-adenylate (AcAMP) intermediate. In the second half reaction, it can then transfer the acetyl group from AcAMP to the sulfhydryl group of CoA, forming the product AcCoA. In Shewanella sp. (strain MR-4), this protein is Acetyl-coenzyme A synthetase.